Reading from the N-terminus, the 356-residue chain is Tyrosine recombinase XerS (356 aa).

The Core-binding (CB) domain maps to 16-121; that stretch reads IMPWYVLDYY…ALSSLYKYLT (106 aa). Residues 169–354 form the Tyr recombinase domain; it reads AFLDYVDKEY…VNDEQKNALD (186 aa). Catalysis depends on residues arginine 210, lysine 234, histidine 306, arginine 309, and histidine 332. Residue tyrosine 341 is the O-(3'-phospho-DNA)-tyrosine intermediate of the active site.

Belongs to the 'phage' integrase family. XerS subfamily.

The protein localises to the cytoplasm. FtsK is required for recombination. Site-specific tyrosine recombinase, which acts by catalyzing the cutting and rejoining of the recombining DNA molecules. Essential to convert dimers of the bacterial chromosome into monomers to permit their segregation at cell division. This is Tyrosine recombinase XerS from Streptococcus equi subsp. zooepidemicus (strain MGCS10565).